A 541-amino-acid chain; its full sequence is T-complex protein 1 subunit epsilon (541 aa).

Residue Ala-2 is modified to N-acetylalanine. Lys-20 participates in a covalent cross-link: Glycyl lysine isopeptide (Lys-Gly) (interchain with G-Cter in SUMO2). Phosphoserine is present on Ser-26. Residue Gly-53 coordinates ADP. ATP is bound at residue Gly-53. Asp-104 contacts Mg(2+). Residues Gly-105, Thr-106, Thr-107, and Ser-175 each coordinate ADP. 2 residues coordinate ATP: Thr-106 and Thr-107. Residues Lys-210, Lys-214, Lys-265, Lys-275, and Lys-279 each participate in a glycyl lysine isopeptide (Lys-Gly) (interchain with G-Cter in SUMO2) cross-link. Ser-346 carries the post-translational modification Phosphoserine. Lys-392 participates in a covalent cross-link: Glycyl lysine isopeptide (Lys-Gly) (interchain with G-Cter in SUMO2). ADP contacts are provided by Gly-422, Asp-492, Glu-508, and Lys-513. An ATP-binding site is contributed by Gly-422. Residue Ser-539 is modified to Phosphoserine.

It belongs to the TCP-1 chaperonin family. Component of the chaperonin-containing T-complex (TRiC), a hexadecamer composed of two identical back-to-back stacked rings enclosing a protein folding chamber. Each ring is made up of eight different subunits: TCP1/CCT1, CCT2, CCT3, CCT4, CCT5, CCT6A/CCT6, CCT7, CCT8. Interacts with PACRG. Interacts with DNAAF4. Interacts with DLEC1. Interacts with SPMAP2. Ubiquitinated by the DCX(DCAF12) complex specifically recognizes the diglutamate (Glu-Glu) at the C-terminus, leading to its degradation.

The protein resides in the cytoplasm. The protein localises to the cytoskeleton. Its subcellular location is the microtubule organizing center. It localises to the centrosome. The catalysed reaction is ATP + H2O = ADP + phosphate + H(+). Its function is as follows. Component of the chaperonin-containing T-complex (TRiC), a molecular chaperone complex that assists the folding of actin, tubulin and other proteins upon ATP hydrolysis. The TRiC complex mediates the folding of WRAP53/TCAB1, thereby regulating telomere maintenance. As part of the TRiC complex may play a role in the assembly of BBSome, a complex involved in ciliogenesis regulating transports vesicles to the cilia. In Pongo abelii (Sumatran orangutan), this protein is T-complex protein 1 subunit epsilon (CCT5).